Reading from the N-terminus, the 1282-residue chain is Clustered mitochondria protein homolog (1282 aa).

Residues 1-43 (MEQNNGTTEHPKEVLDQTNPSNEVTGVPNGNHAEGEGDQNAGE) form a disordered region. The Clu domain occupies 341-585 (DITRPQENYL…RITPLDVLWY (245 aa)). Composition is skewed to basic and acidic residues over residues 631-641 (EAEEKAEESKP) and 653-669 (ESEK…RVDI). Disordered regions lie at residues 631 to 669 (EAEE…RVDI) and 892 to 936 (RSQL…PAPA). Low complexity predominate over residues 924–936 (QASPRPAQSPAPA). One copy of the TPR repeat lies at 1003-1036 (AKLYHQLSMLYYQSDDKDAAVELARKAVIVTERT). The disordered stretch occupies residues 1202–1282 (ANLPTRLGTK…SKQSTVKPSS (81 aa)). The span at 1212–1223 (PQPQVGQTTSEM) shows a compositional bias: polar residues. Over residues 1257 to 1272 (TKQKKRAAARNPKLRG) the composition is skewed to basic residues. Over residues 1273 to 1282 (SKQSTVKPSS) the composition is skewed to polar residues.

The protein belongs to the CLU family. In terms of assembly, may associate with the eukaryotic translation initiation factor 3 (eIF-3) complex.

The protein resides in the cytoplasm. In terms of biological role, mRNA-binding protein involved in proper cytoplasmic distribution of mitochondria. The sequence is that of Clustered mitochondria protein homolog from Coccidioides immitis (strain RS) (Valley fever fungus).